Consider the following 384-residue polypeptide: NADH-quinone oxidoreductase subunit D 2 (384 aa).

This sequence belongs to the complex I 49 kDa subunit family. In terms of assembly, NDH-1 is composed of 14 different subunits. Subunits NuoB, C, D, E, F, and G constitute the peripheral sector of the complex.

It is found in the cell membrane. The enzyme catalyses a quinone + NADH + 5 H(+)(in) = a quinol + NAD(+) + 4 H(+)(out). Functionally, NDH-1 shuttles electrons from NADH, via FMN and iron-sulfur (Fe-S) centers, to quinones in the respiratory chain. The immediate electron acceptor for the enzyme in this species is believed to be a menaquinone. Couples the redox reaction to proton translocation (for every two electrons transferred, four hydrogen ions are translocated across the cytoplasmic membrane), and thus conserves the redox energy in a proton gradient. This chain is NADH-quinone oxidoreductase subunit D 2, found in Symbiobacterium thermophilum (strain DSM 24528 / JCM 14929 / IAM 14863 / T).